Consider the following 1019-residue polypeptide: Macrophage colony-stimulating factor 1 receptor 2 (1019 aa).

The signal sequence occupies residues 1-18 (MKSYCLLLSITLSCCCSA). Residues 19 to 576 (EDLPDPPSIH…LREHNSAFMS (558 aa)) lie on the Extracellular side of the membrane. Ig-like C2-type domains follow at residues 37–109 (QAEA…IHLY), 106–212 (IHLY…LLVA), and 224–312 (QNKA…LIVL). The cysteines at positions 52 and 92 are disulfide-linked. N-linked (GlcNAc...) asparagine glycosylation is found at Asn96, Asn148, Asn169, Asn249, Asn342, Asn346, Asn355, Asn369, Asn379, Asn408, Asn422, Asn429, Asn433, and Asn514. Intrachain disulfides connect Cys139/Cys193 and Cys239/Cys294. 2 consecutive Ig-like C2-type domains span residues 383–474 (STTV…LRIY) and 487–567 (TLTC…VFHL). A disulfide bond links Cys490 and Cys552. Residues 577–597 (ALIGAGSTAAILFLLLLVVFY) form a helical membrane-spanning segment. Over 598-1019 (KWRQKPKYEI…LSVTNIYQLS (422 aa)) the chain is Cytoplasmic. The segment at 601-633 (QKPKYEIRWKIIESTEGNHYTFVDPTLLPYNYK) is regulatory juxtamembrane domain. At Tyr620 the chain carries Phosphotyrosine; by autocatalysis. In terms of domain architecture, Protein kinase spans 641–963 (LRLGAVLGSG…MICQLIDRLL (323 aa)). ATP contacts are provided by residues 647–655 (LGSGAFGKV) and Lys674. Residues Tyr756 and Tyr778 each carry the phosphotyrosine; by autocatalysis modification. Asp827 functions as the Proton acceptor in the catalytic mechanism. The tract at residues 845 to 867 (DFGLARDIQNDDSYIVQGNARLP) is activation loop. A phosphotyrosine; by autocatalysis mark is found at Tyr858 and Tyr974. Residues 970-1001 (NHQSYSNINETKKDDFKGGKSQRRGEEEEQRR) are disordered. A compositionally biased stretch (basic and acidic residues) spans 979–1001 (ETKKDDFKGGKSQRRGEEEEQRR). Tyr1016 is modified (phosphotyrosine; by autocatalysis).

It belongs to the protein kinase superfamily. Tyr protein kinase family. CSF-1/PDGF receptor subfamily. Monomer. Homodimer. Interacts with CSF1. In terms of processing, autophosphorylated in response to CSF1 binding. autophosphorylation, leading to its degradation. Post-translationally, ubiquitinated. Becomes rapidly polyubiquitinated after autophosphorylation, leading to its degradation.

The protein resides in the cell membrane. It catalyses the reaction L-tyrosyl-[protein] + ATP = O-phospho-L-tyrosyl-[protein] + ADP + H(+). Its activity is regulated as follows. Present in an inactive conformation in the absence of bound ligand. CSF1 binding leads to dimerization and activation by autophosphorylation on tyrosine residues. In terms of biological role, tyrosine-protein kinase that acts as a cell-surface receptor for CSF1 and plays an essential role in the regulation of survival, proliferation and differentiation of hematopoietic precursor cells, especially mononuclear phagocytes, such as macrophages and monocytes. Plays an important role in innate immunity and in inflammatory processes. Plays an important role in the regulation of osteoclast proliferation and differentiation, the regulation of bone resorption, and is required for normal bone development. Promotes reorganization of the actin cytoskeleton, regulates formation of membrane ruffles, cell adhesion and cell migration. Activates several signaling pathways in response to ligand binding. This chain is Macrophage colony-stimulating factor 1 receptor 2 (csf1r2), found in Takifugu rubripes (Japanese pufferfish).